We begin with the raw amino-acid sequence, 1919 residues long: MEPQRRELLAQCQQSLAQAMTEVEAVLGLLEAAGALSPGERRQLDEEAGGAKAELLLKLLLAKERDHFQDLRAALEKTQPHLLPILYLNGVVGPPQPAEGAGSTYSVLSTMPSDSESSSSLSSVGTTGKAPSPPPLLTDQQVNEKVENLSIQLRLMTRERNELRKRLAFATHGTAFDKRPYHRLNPDYERLKIQCVRAMSDLQSLQNQHTNALKRCEEVAKETDFYHTLHSRLLSDQTRLKDDVDMLRRENGQLLRERNLLQQSWEDMKRLHEEDQKEIGDLRAQQQQVLKHNGSSEILNKLYDTAMDKLEVVKKDYDALRKRYSEKVAIHNADLSRLEQLGEENQRLLKQTEMLTQQRDTAIQLQHQCALSLRRFEAIHHELNKATAQNKDLQWEMELLQSELTELRTTQVKTAKESEKYREERDAVYSEYKLIMSERDQVISELDKLQTEVELAESKLKSSTSEKKAANEEMEALRQIKDTVTMDAGRANKEVEILRKQCKALCQELKEALQEADVAKCRRDWAFQERDKIVAERDSIRTLCDNLRRERDRAVSELAEALRSLDDTRKQKNDVSRELKELKEQMESQLEKEARFRQLMAHSSHDSAIDTDSMEWETEVVEFERETEDIDLKALGFDMAEGVNEPCFPGDCGIFVTKVDKGSIADGRLRVNDWLLRINDVDLINKDKKQAIKALLNGEGAINMVVRRRKSLGGKVVTPLHINLSGQKDSGISLENGVYAAAVLPGSPAAKEGSLAVGDRIVAINGIALDNKSLNECESLLRSCQDSLTLSLLKVFPQSSSWSGQNIFENIKDSDKMLSFRAHGPEVQAHNKRNLIQHNNSTQTDIFYTDRLEDRKEPGPPGGSSSFLHKPFPGGPLQVCPQACPSASERSLSSFRSDASGDRGFGLVDVRGRRPLLPFETEVGPCGVGEASLDKADSEGSNSGGTWPKAMLSSTAVPEKLSVYKKPKQRKSIFDPNTFKRPQTPPKIDYLLPGPGPAHSPQPSKRAGPLTPPKPPRRSDSIKFQHRLETSSESEATLVGSSPSTSPPSALPPDVDPGEPMHASPPRKARVRIASSYYPEGDGDSSHLPAKKSCDEDLTSQKVDELGQKRRRPKSAPSFRPKLAPVVIPAQFLEEQKCVPASGELSPELQEWAPYSPGHSSRHSNPPLYPSRPSVGTVPRSLTPSTTVSSILRNPIYTVRSHRVGPCSSPPAARDAGPQGLHPSVQHQGRLSLDLSHRTCSDYSEMRATHGSNSLPSSARLGSSSNLQFKAERIKIPSTPRYPRSVVGSERGSVSHSECSTPPQSPLNIDTLSSCSQSQTSASTLPRIAVNPASLGERRKDRPYVEEPRHVKVQKGSEPLGISIVSGEKGGIYVSKVTVGSIAHQAGLEYGDQLLEFNGINLRSATEQQARLIIGQQCDTITILAQYNPHVHQLSSHSRSSSHLDPAGTHSTLQGSGTTTPEHPSVIDPLMEQDEGPSTPPAKQSSSRIAGDANKKTLEPRVVFIKKSQLELGVHLCGGNLHGVFVAEVEDDSPAKGPDGLVPGDLILEYGSLDVRNKTVEEVYVEMLKPRDGVRLKVQYRPEEFTKAKGLPGDSFYIRALYDRLADVEQELSFKKDDILYVDDTLPQGTFGSWMAWQLDENAQKIQRGQIPSKYVMDQEFSRRLSMSEVKDDNSATKTLSAAARRSFFRRKHKHKRSGSKDGKDLLALDAFSSDSIPLFEDSVSLAYQRVQKVDCTALRPVLILGPLLDVVKEMLVNEAPGKFCRCPLEVMKASQQAIERGVKDCLFVDYKRRSGHFDVTTVASIKEITEKNRHCLLDIAPHAIERLHHMHIYPIVIFIHYKSAKHIKEQRDPIYLRDKVTQRHSKEQFEAAQKLEQEYSRYFTGVIQGGALSSICTQILAMVNQEQNKVLWIPACPL.

Residues 98–142 (AEGAGSTYSVLSTMPSDSESSSSLSSVGTTGKAPSPPPLLTDQQV) are disordered. The span at 109 to 123 (STMPSDSESSSSLSS) shows a compositional bias: low complexity. Phosphoserine occurs at positions 264 and 295. Positions 383-599 (LNKATAQNKD…LEKEARFRQL (217 aa)) form a coiled coil. PDZ domains follow at residues 620–710 (VVEF…RRRK) and 705–796 (VVRR…LKVF). The residue at position 900 (S900) is a Phosphoserine. Disordered stretches follow at residues 927–1122 (GVGE…FRPK), 1150–1187 (QEWA…PSTT), 1201–1230 (SHRV…HQGR), 1245–1264 (EMRA…LGSS), and 1271–1306 (AERI…PQSP). The residue at position 984 (T984) is a Phosphothreonine. Phosphoserine is present on S1000. T1011 bears the Phosphothreonine mark. The segment covering 1017–1030 (RRSDSIKFQHRLET) has biased composition (basic and acidic residues). The residue at position 1021 (S1021) is a Phosphoserine. Positions 1045-1055 (TSPPSALPPDV) are enriched in pro residues. A Phosphothreonine modification is found at T1183. Phosphoserine is present on residues S1209 and S1263. Low complexity-rich tracts occupy residues 1252-1264 (SNSL…LGSS) and 1284-1298 (RSVV…SHSE). Residue S1334 is modified to Phosphoserine. The PDZ 3 domain occupies 1350 to 1429 (HVKVQKGSEP…TITILAQYNP (80 aa)). The disordered stretch occupies residues 1434 to 1493 (LSSHSRSSSHLDPAGTHSTLQGSGTTTPEHPSVIDPLMEQDEGPSTPPAKQSSSRIAGDA). Residues 1449 to 1462 (THSTLQGSGTTTPE) show a composition bias toward polar residues. Residues 1501–1582 (RVVFIKKSQL…GVRLKVQYRP (82 aa)) form the PDZ 4 domain. Residues 1593–1661 (GDSFYIRALY…PSKYVMDQEF (69 aa)) enclose the SH3 domain. Residue S1666 is modified to Phosphoserine. Positions 1722–1905 (DSVSLAYQRV…ICTQILAMVN (184 aa)) constitute a Guanylate kinase-like domain.

The protein belongs to the MAGUK family. As to quaternary structure, interacts with MPP1. Interacts with CTNNB1 and with the third SH3 domain of SORBS3 to form a ternary complex. Interacts (via coiled-coil domain) with MARK3. Interacts (via PDZ domain 3) with STK3/MST2 and STK4/MST1. Interacts with SCRIB. Interacts with CTNB1, SMO and (via PDZ4 or guanylate kinase-like domain) with KIF7. In terms of tissue distribution, highly expressed in normal breast tissues and low-grade breast cancer tissues (at protein level). Highly expressed in the placenta and prostate. Expressed at a lower level in the thyroid, spinal cord, trachea, adrenal gland, skeletal muscle, pancreas, heart, brain, liver and kidney. A short splice product shows more limited expression, being absent from at least the brain.

It localises to the cell junction. The protein localises to the cell membrane. The protein resides in the postsynaptic density. It is found in the cytoplasm. Its subcellular location is the cytoskeleton. It localises to the cilium basal body. Its function is as follows. Acts as a regulator of the Hippo signaling pathway. Negatively regulates the Hippo signaling pathway by mediating the interaction of MARK3 with STK3/4, bringing them together to promote MARK3-dependent hyperphosphorylation and inactivation of STK3 kinase activity toward LATS1. Positively regulates the Hippo signaling pathway by mediating the interaction of SCRIB with STK4/MST1 and LATS1 which is important for the activation of the Hippo signaling pathway. Involved in regulating cell proliferation, maintenance of epithelial polarity, epithelial-mesenchymal transition (EMT), cell migration and invasion. Plays an important role in dendritic spine formation and synaptogenesis in cortical neurons; regulates synaptogenesis by enhancing the cell surface localization of N-cadherin. Acts as a positive regulator of hedgehog (Hh) signaling pathway. Plays a critical role in the early point of the SMO activity cycle by interacting with SMO at the ciliary base to induce the accumulation of KIF7 and GLI2 at the ciliary tip for GLI2 activation. This is Disks large homolog 5 (DLG5) from Homo sapiens (Human).